A 47-amino-acid polypeptide reads, in one-letter code: uncharacterized protein (47 aa).

Residues 24–47 (FGPNPIEPPTDIAPDPDSTKTWLI) are disordered.

This is an uncharacterized protein from Mycobacterium tuberculosis (strain ATCC 25618 / H37Rv).